Reading from the N-terminus, the 429-residue chain is Protein arginine N-methyltransferase 2 (429 aa).

2 disordered regions span residues 41 to 76 and 137 to 180; these read PEVA…EDHE and ALDS…EETP. The span at 137–163 shows a compositional bias: acidic residues; it reads ALDSDDEDDEEMAEGEEAQAEDGEEAP. Low complexity predominate over residues 164–174; it reads ELVAAEEATQT. One can recognise an RMT2 domain in the interval 190–429; that stretch reads LEEQVTSDKY…YRLPVCTFLG (240 aa). S-adenosyl-L-methionine contacts are provided by residues Tyr199, Met228, 250 to 255, 271 to 273, 308 to 309, and Asp328; these read FGMGII, EAH, and WQ.

It belongs to the class I-like SAM-binding methyltransferase superfamily. RMT2 methyltransferase family. In terms of assembly, monomer.

The protein localises to the cytoplasm. The protein resides in the nucleus. S-adenosyl-L-methionine-dependent protein-arginine N-methyltransferase that methylates the delta-nitrogen atom of arginine residues to form N5-methylarginine (type IV) in target proteins. Monomethylates ribosomal protein L12. The polypeptide is Protein arginine N-methyltransferase 2 (Neurospora crassa (strain ATCC 24698 / 74-OR23-1A / CBS 708.71 / DSM 1257 / FGSC 987)).